The following is a 2227-amino-acid chain: MNMSKQGIFQTVGSGLDHILSLADIEEEQMIQSVDRTAVTGASYFTSVDQSSVHTAEVGSHQIEPLKTSVDKPGSKKTQGEKFFLIHSADWLTTHALFHEVAKLDVVKLLYNEQFAVQGLLRYHTYARFGIEIQVQINPTPFSQGGLICAMVPGDQSYGSIASLTVYPHGLLNCNINNVVRIKVPFIYTRGAYHFKDPQYPVWELTIRVWSELNIGTGTSAYTSLNVLARFTDLELHGLTPLSTQMMRNEFRVSTTENVVNLSNYEDARAKMSFALDQEDWKSDPSQGGGIKITHFTTWTSIPTLAAQFPFNASDSVGQQIKVIPVDPYFFQMTNTNPDQKCITALASICQMFCFWRGDLVFDFQVFPTKYHSGRLLFCFVPGNELIDVTGITLKQATTAPCAVMDITGVQSTLRFRVPWISDTPYRVNRYTKSAHQKGEYTAIGKLIVYCYNRLTSPSNVASHVRVNVYLSAINLECFAPLYHAMDVTTQVGDDSGGFSTTVSTEQNVPDPQVGIITMRDLKGKANRGKMDVSGVQAPVGAITTIEDPVLAKKVPETFPELKPGESRHTSDHMSIYKFMGRSHFLCTFIFNSNNKEYTFPITLSSTSNPPHGLPSTLRWFFNLFQLYRGPLDLTIIITGATDVDGMAWFTPVGLAVDTPWVEKESALSIDYKTALGAVRFNTRRTGNIQIRLPWYSYLYAVSGALDGLGDKTDSTFGLVSIQIANYNHSDEYLSFSCYLSVTEQSEFYFPRAPLNSNAMLSTESMMSRIAAGDLESSVDDPRSEEDRRFESHIECRKPYKELRLEVGKQRLKYAQEELSNEVLPPPRKMKGVFSQAKISLFYTEEHEIMKFSWRGVTADTRALRRFGFSMAAGRSVWTLEMDAGVLTGRLVRLNDEKWTEMKDDKIVSLIEKFTSNKYWSKVNFPHGMLDLEEIAANSKDFPNMSETDLCFLLHWLNPKKINLADRMLGLSGVQEIKEQGVGLIAECRTFLDSIAGTLKSMMFGFHHSVTVEIINTVLCFVKSGILLYVIQQLNQDEHSHIIGLLRVMNYVDIGCSVISCGKVFSKMLETVFNWQMDSRMMELRTQSFSNWLRDICSGITIFKSFKDAIYWLYTKLKDFYEVNYGKKKDVLNILKDNRQKIEKAIEEADNLCILQIQDVEKFDQYQKGVDLIQKLRTVHSMAQVDPNLGVHLSPLRDCIARVHQKLKNLGSINQAMVTRCEPVVCYLIGKRGGGKSLTSIALATKICKHYGVEPEKNIYTKPVASDYWDGYSGQLVCIIDDIGQNTTDEDWSDFCQLVSGCPMRLNMASLEEKGRHFSSPFIIATSNWSNPSPKTVYVKEAIDRRLHFKVEVKPASFFKNPHNDMLNVNLAKTNDAIKDMSCVDLIMDGHNISLMDLLSSLVMTVEIRKQNMSEFMELWSQGISDYDNDSAVAEFFQSFPSGKPSNSKLSSFFQSVTNHKWVAVGAAVGILGVLVAGWFVYRHFSRKEEEPIPTEGVYYGVTKPKQVIKLDADPVESQSPLEIAGLVRKNLVQFGVGEKNGCVRWVMNALGVKDDWLLVPSHAYKFEKDYEMMEFYFNRGGTYYSISAGNVVIQSLDVGFQDVVLMKVPTIPKFRDITQHFIKKGDVPRALNRLATLVTTVNGTPMLISEGPLKMEEKATYVHKKNDGTTVDLTVDQAWRGKGEGLPGMCGGALVSSNQSIQNAILGIHVAGGNSILVAKLVTQEMFQNIDKKIESQRIMKVEFSQCSMNVVSKTLFRKSPIHHHIDKTMINFPAALPFSKAEIDPMAIMLSKYSLPIVEEPEDYKEASVFYQNKIVGKTQLVDDFLDLDMAITGAPGIDAINMDSSPGFPYVQEKLTKRDLIWLDENGLLLGVHPRLAQRILFNTVMMENCSDLDVVFTTCPKDELRPLEKVLESKTRAIDACPLDYTILCRMYWGPAISYFHLNPGFHTGVAIGIDPDRQWDELFKTMIRFGDVGLDLDFSAFDASLSPFMIREAGRIMSELSGTPSHFGTALINTIIYSKHLLYNCCYHVYGSMPSGSPCTALLNSIINNINLYYVFSKIFGKSPVFFCQALRILCYGDDVLIVFSRDVQIDNLDLIGQKIVDEFRKLGMTATSADKNVPQLKPVSELTFLKRSFNLVEDRIRPAISEKTIWSLIAWQRGNAEFEQNLENAQWFAFMHGYEFYQKFYYFVQSCLEKEMIEYRLKSYDWWRMRFYDQCFICDLS.

2 consecutive short sequence motifs ((L)YPX(n)L motif) follow at residues 167-171 (YPHGL) and 200-205 (YPVWEL). The tract at residues 766-836 (MMSRIAAGDL…PRKMKGVFSQ (71 aa)) is involved in P1-2A pentamerization. Residues 1011 to 1031 (TVEIINTVLCFVKSGILLYVI) form a helical membrane-spanning segment. The segment at 1043–1070 (IGLLRVMNYVDIGCSVISCGKVFSKMLE) is membrane-penetrating ability. The stretch at 1127–1155 (KKKDVLNILKDNRQKIEKAIEEADNLCIL) forms a coiled coil. Residues 1204-1366 (HQKLKNLGSI…SFFKNPHNDM (163 aa)) enclose the SF3 helicase domain. 1230–1237 (GKRGGGKS) serves as a coordination point for ATP. A helical transmembrane segment spans residues 1462–1482 (WVAVGAAVGILGVLVAGWFVY). Tyr1499 carries the post-translational modification O-(5'-phospho-RNA)-tyrosine. Residues 1514-1728 (DPVESQSPLE…VAKLVTQEMF (215 aa)) form the Peptidase C3 domain. Active-site for protease 3C activity residues include His1563, Asp1603, and Cys1691. The 122-residue stretch at 1976–2097 (DVGLDLDFSA…VFSRDVQIDN (122 aa)) folds into the RdRp catalytic domain.

Belongs to the picornaviridae polyprotein family. In terms of assembly, homodimer. Homomultimer; probably interacts with membranes in a multimeric form. Seems to assemble into amyloid-like fibers. Homodimer. Monomer. Interacts with protein 3CD. As to quaternary structure, interacts with host ACBD3. In terms of assembly, interacts with protein 3AB. Interacts with human MAVS. As to quaternary structure, homodimer; disulfide-linked. In terms of assembly, homopentamer. Homooligomer. Interacts with capsid protein VP2. Interacts with capsid protein VP3. As to quaternary structure, interacts with capsid protein VP1. Interacts with capsid protein VP3. In terms of assembly, interacts with capsid protein VP1. Interacts with capsid protein VP2. In terms of processing, specific enzymatic cleavages by viral protease in vivo yield a variety of precursors and mature proteins. Polyprotein processing intermediates are produced, such as P1-2A which is a functional precursor of the structural proteins, VP0 which is a VP4-VP2 precursor, VP1-2A precursor, 3ABC precursor which is a stable and catalytically active precursor of 3A, 3B and 3C proteins, 3AB and 3CD precursors. The assembly signal 2A is removed from VP1-2A by a host protease, possibly host Cathepsin L. This cleavage occurs over a region of 3 amino-acids probably generating VP1 proteins with heterogeneous C-termini. During virion maturation, immature virions are rendered infectious following cleavage of VP0 into VP4 and VP2. This maturation seems to be an autocatalytic event triggered by the presence of RNA in the capsid and is followed by a conformational change of the particle. Post-translationally, the assembly signal 2A is removed from VP1-2A by a host protease, possibly host Cathepsin L in naked virions. This cleavage does not occur in enveloped virions. This cleavage occurs over a region of 3 amino-acids probably generating VP1 proteins with heterogeneous C-termini. In terms of processing, VPg is uridylylated prior to priming replication into VPg-pUpU. Unlike other picornaviruses, does not seem to be myristoylated.

It localises to the virion. The protein localises to the host endosome. Its subcellular location is the host multivesicular body. It is found in the host membrane. The protein resides in the host mitochondrion outer membrane. It localises to the host cytoplasm. The protein localises to the host cytoplasmic vesicle membrane. The enzyme catalyses RNA(n) + a ribonucleoside 5'-triphosphate = RNA(n+1) + diphosphate. It carries out the reaction a ribonucleoside 5'-triphosphate + H2O = a ribonucleoside 5'-diphosphate + phosphate + H(+). It catalyses the reaction Selective cleavage of Gln-|-Gly bond in the poliovirus polyprotein. In other picornavirus reactions Glu may be substituted for Gln, and Ser or Thr for Gly.. Its function is as follows. Capsid proteins VP1, VP2, and VP3 form a closed capsid enclosing the viral positive strand RNA genome. All these proteins contain a beta-sheet structure called beta-barrel jelly roll. Together they form an icosahedral capsid (T=3) composed of 60 copies of each VP1, VP2, and VP3, with a diameter of approximately 300 Angstroms. VP1 is situated at the 12 fivefold axes, whereas VP2 and VP3 are located at the quasi-sixfold axes. The naked capsid interacts with the host receptor HAVCR1 to provide virion attachment to and probably entry into the target cell. VP0 precursor is a component of the immature procapsids. In terms of biological role, plays a role in the assembly of the 12 pentamers into an icosahedral structure. Has not been detected in mature virions, supposedly owing to its small size. Functionally, precursor component of immature procapsids that corresponds to an extended form of the structural protein VP1. After maturation, possibly by the host Cathepsin L, the assembly signal 2A is cleaved to give rise to the mature VP1 protein. Its function is as follows. Functions as a viroporin. Affects membrane integrity and causes an increase in membrane permeability. Involved in host intracellular membrane rearrangements probably to give rise to the viral factories. Does not disrupt calcium homeostasis or glycoprotein trafficking. Antagonizes the innate immune response of the host by suppressing IFN-beta synthesis, which it achieves by interfering with the RIG-I/IFIH1 pathway. Affects membrane integrity and causes an increase in membrane permeability. In terms of biological role, associates with and induces structural rearrangements of intracellular membranes. Displays RNA-binding activity. Functionally, the precursor 3ABC is targeted to the mitochondrial membrane where protease 3C activity cleaves and inhibits the host antiviral protein MAVS, thereby disrupting activation of IRF3 through the IFIH1/MDA5 pathway. In vivo, the protease activity of 3ABC precursor is more efficient in cleaving the 2BC precursor than that of protein 3C. The 3ABC precursor may therefore play a role in the proteolytic processing of the polyprotein. Possible viroporin. Its function is as follows. Interacts with the 3CD precursor and with RNA structures found at both the 5'- and 3'-termini of the viral genome. Since the 3AB precursor contains the hydrophobic domain 3A, it probably anchors the whole viral replicase complex to intracellular membranes on which viral RNA synthesis occurs. May serve as membrane anchor to the 3AB and 3ABC precursors via its hydrophobic domain. May interact with RNA. In terms of biological role, acts as a primer for viral RNA replication and remains covalently bound to viral genomic RNA. VPg is uridylylated prior to priming replication into VPg-pUpU. The VPg-pUpU is then used as primer on the genomic RNA poly(A) by the RNA-dependent RNA polymerase to replicate the viral genome. Functionally, cysteine protease that generates mature viral proteins from the precursor polyprotein. In addition to its proteolytic activity, it binds to viral RNA, and thus influences viral genome replication. RNA and substrate bind cooperatively to the protease. Cleaves IKBKG/NEMO to impair innate immune signaling. Cleaves host PABPC1 which may participate in the switch of viral translation to RNA synthesis. Its function is as follows. Interacts with the 3AB precursor and with RNA structures found at both the 5'- and 3'-termini of the viral genome. Disrupts TLR3 signaling by degrading the host adapter protein TICAM1/TRIF. RNA-directed RNA polymerase 3D-POL replicates genomic and antigenomic RNA by recognizing replications specific signals. This chain is Genome polyprotein, found in Homo sapiens (Human).